The sequence spans 264 residues: MFPELNSLLNASPDTFKPGDFILLSDRQADASFLIHHYLSFYLRAGCKVCFLGLVQSFSHYSAVGQRLGVSLTQAREKGQLVFLEGLKDSIGAILKEDTSEGTQALSYLRSPRAGLEGLFRFVESSLCQSGDDGPPVLIIDDLSVLLSLGVSAGAILDFTLYCRATVCSELQGNMVILVRCEEEDADDDEEGLNLLQRGLVHQCHLALHVEGLPTGYCRDIHGQMEVWWRQGENDAYNQRKIFQFKVHDKGASFFTRGTSRAVL.

The protein belongs to the ELP6 family. As to quaternary structure, component of the elongator complex.

It is found in the cytoplasm. It localises to the nucleus. Its pathway is tRNA modification; 5-methoxycarbonylmethyl-2-thiouridine-tRNA biosynthesis. Functionally, component of the elongator complex which is required for multiple tRNA modifications, including mcm5U (5-methoxycarbonylmethyl uridine), mcm5s2U (5-methoxycarbonylmethyl-2-thiouridine), and ncm5U (5-carbamoylmethyl uridine). The elongator complex catalyzes formation of carboxymethyluridine in the wobble base at position 34 in tRNAs. The protein is Elongator complex protein 6 (elp6) of Danio rerio (Zebrafish).